Reading from the N-terminus, the 475-residue chain is Bifunctional protein HldE (475 aa).

The ribokinase stretch occupies residues methionine 1 to alanine 317. Asparagine 194 to glutamate 197 provides a ligand contact to ATP. Aspartate 263 is a catalytic residue. A cytidylyltransferase region spans residues methionine 343–glutamate 475.

It in the N-terminal section; belongs to the carbohydrate kinase PfkB family. In the C-terminal section; belongs to the cytidylyltransferase family. Homodimer.

The catalysed reaction is D-glycero-beta-D-manno-heptose 7-phosphate + ATP = D-glycero-beta-D-manno-heptose 1,7-bisphosphate + ADP + H(+). It carries out the reaction D-glycero-beta-D-manno-heptose 1-phosphate + ATP + H(+) = ADP-D-glycero-beta-D-manno-heptose + diphosphate. It participates in nucleotide-sugar biosynthesis; ADP-L-glycero-beta-D-manno-heptose biosynthesis; ADP-L-glycero-beta-D-manno-heptose from D-glycero-beta-D-manno-heptose 7-phosphate: step 1/4. It functions in the pathway nucleotide-sugar biosynthesis; ADP-L-glycero-beta-D-manno-heptose biosynthesis; ADP-L-glycero-beta-D-manno-heptose from D-glycero-beta-D-manno-heptose 7-phosphate: step 3/4. In terms of biological role, catalyzes the phosphorylation of D-glycero-D-manno-heptose 7-phosphate at the C-1 position to selectively form D-glycero-beta-D-manno-heptose-1,7-bisphosphate. Catalyzes the ADP transfer from ATP to D-glycero-beta-D-manno-heptose 1-phosphate, yielding ADP-D-glycero-beta-D-manno-heptose. This Histophilus somni (strain 129Pt) (Haemophilus somnus) protein is Bifunctional protein HldE.